The chain runs to 466 residues: Asparagine--tRNA ligase (466 aa).

This sequence belongs to the class-II aminoacyl-tRNA synthetase family. As to quaternary structure, homodimer.

It is found in the cytoplasm. The enzyme catalyses tRNA(Asn) + L-asparagine + ATP = L-asparaginyl-tRNA(Asn) + AMP + diphosphate + H(+). This Vibrio cholerae serotype O1 (strain ATCC 39315 / El Tor Inaba N16961) protein is Asparagine--tRNA ligase.